A 742-amino-acid chain; its full sequence is Phosphoribosylformylglycinamidine synthase subunit PurL (742 aa).

Residue His-54 is part of the active site. The ATP site is built by Tyr-57 and Lys-96. Residue Glu-98 participates in Mg(2+) binding. Substrate-binding positions include 99-102 and Arg-121; that span reads SHNH. Residue His-100 is the Proton acceptor of the active site. Asp-122 is a binding site for Mg(2+). Position 245 (Gln-245) interacts with substrate. Position 273 (Asp-273) interacts with Mg(2+). 317 to 319 serves as a coordination point for substrate; that stretch reads ESQ. Residues Asp-500 and Gly-537 each contribute to the ATP site. Asn-538 provides a ligand contact to Mg(2+). Ser-540 contributes to the substrate binding site.

The protein belongs to the FGAMS family. Monomer. Part of the FGAM synthase complex composed of 1 PurL, 1 PurQ and 2 PurS subunits.

The protein resides in the cytoplasm. It carries out the reaction N(2)-formyl-N(1)-(5-phospho-beta-D-ribosyl)glycinamide + L-glutamine + ATP + H2O = 2-formamido-N(1)-(5-O-phospho-beta-D-ribosyl)acetamidine + L-glutamate + ADP + phosphate + H(+). It participates in purine metabolism; IMP biosynthesis via de novo pathway; 5-amino-1-(5-phospho-D-ribosyl)imidazole from N(2)-formyl-N(1)-(5-phospho-D-ribosyl)glycinamide: step 1/2. Its function is as follows. Part of the phosphoribosylformylglycinamidine synthase complex involved in the purines biosynthetic pathway. Catalyzes the ATP-dependent conversion of formylglycinamide ribonucleotide (FGAR) and glutamine to yield formylglycinamidine ribonucleotide (FGAM) and glutamate. The FGAM synthase complex is composed of three subunits. PurQ produces an ammonia molecule by converting glutamine to glutamate. PurL transfers the ammonia molecule to FGAR to form FGAM in an ATP-dependent manner. PurS interacts with PurQ and PurL and is thought to assist in the transfer of the ammonia molecule from PurQ to PurL. This Geobacillus kaustophilus (strain HTA426) protein is Phosphoribosylformylglycinamidine synthase subunit PurL.